A 536-amino-acid polypeptide reads, in one-letter code: Membrane protein insertase YidC (536 aa).

4 helical membrane-spanning segments follow: residues 5–25 (LIIA…IFPT), 353–373 (GNYG…FFPL), 418–438 (VNPL…FGLY), and 495–515 (MLML…GLVI).

Belongs to the OXA1/ALB3/YidC family. Type 1 subfamily. In terms of assembly, interacts with the Sec translocase complex via SecD. Specifically interacts with transmembrane segments of nascent integral membrane proteins during membrane integration.

The protein resides in the cell inner membrane. Required for the insertion and/or proper folding and/or complex formation of integral membrane proteins into the membrane. Involved in integration of membrane proteins that insert both dependently and independently of the Sec translocase complex, as well as at least some lipoproteins. Aids folding of multispanning membrane proteins. This Geobacter sp. (strain M21) protein is Membrane protein insertase YidC.